Consider the following 798-residue polypeptide: General transcription and DNA repair factor IIH helicase/translocase subunit XPB (798 aa).

Disordered regions lie at residues 1–62 (MGPP…EQIN) and 235–254 (PPGATDKPTPDPAAAAGADG). Residues 6 to 22 (KSRKDRSGGDKFGKKRR) carry the Nuclear localization signal motif. Basic and acidic residues predominate over residues 10-25 (DRSGGDKFGKKRRAED). Residues 33–42 (DDNDSLDATE) show a composition bias toward acidic residues. The Helicase ATP-binding domain occupies 343–504 (MFGNGRARSG…DLNFLIGPKL (162 aa)). 360–367 (AGKSLVGV) is an ATP binding site. The short motif at 457–460 (DEVH) is the DEVH box element. The region spanning 558 to 713 (RSCQFLIKYH…KVITHLKGMD (156 aa)) is the Helicase C-terminal domain. The segment at 746-765 (LPGEPGYRPSGSGGAVRRVG) is disordered.

It belongs to the helicase family. RAD25/XPB subfamily. As to quaternary structure, component of the 7-subunit TFIIH core complex composed of haywire/XPB/ERCC3, XPD/ERCC2, GTF2H1, GTF2H2, GTF2H3, GTF2H4 and GTF2H5, which is active in NER. The core complex associates with the 3-subunit CDK-activating kinase (CAK) module composed of CCNH/cyclin H, CDK7 and MNAT1 to form the 10-subunit holoenzyme (holo-TFIIH) active in transcription. Interacts with PUF60. Interacts with ATF7IP. Interacts with Epstein-Barr virus EBNA2.

The protein localises to the nucleus. It catalyses the reaction Couples ATP hydrolysis with the unwinding of duplex DNA by translocating in the 3'-5' direction.. The enzyme catalyses ATP + H2O = ADP + phosphate + H(+). ATP-dependent 3'-5' DNA helicase/translocase; binds dsDNA rather than ssDNA, unzipping it in a translocase rather than classical helicase activity. Component of the general transcription and DNA repair factor IIH (TFIIH) core complex. When complexed to CDK-activating kinase (CAK), involved in RNA transcription by RNA polymerase II. The ATPase activity of XPB/ERCC3, but not its helicase activity, is required for DNA opening; it may wrap around the damaged DNA wedging it open, causing localized melting and twisting that allows XPD/ERCC2 helicase to anchor. The ATP-dependent helicase activity of XPB/ERCC3 may be required for promoter escape. Also involved in transcription-coupled nucleotide excision repair (NER) of damaged DNA. In NER, TFIIH acts by opening DNA around the lesion to allow the excision of the damaged oligonucleotide and its replacement by a new DNA fragment. The structure of the TFIIH transcription complex differs from the NER-TFIIH complex; large movements by XPD/ERCC2 and XPB/ERCC3 are stabilized by XPA. This chain is General transcription and DNA repair factor IIH helicase/translocase subunit XPB (hay), found in Drosophila melanogaster (Fruit fly).